We begin with the raw amino-acid sequence, 341 residues long: GTP-binding protein REM 2 (341 aa).

Residues 1 to 13 (MHTDLDTDMDMDT) are compositionally biased toward acidic residues. 2 disordered regions span residues 1 to 71 (MHTD…GSMP) and 84 to 106 (VDEL…GSGE). Polar residues predominate over residues 18–30 (LCSSSSRQASPLG). Phosphoserine is present on Ser27. The segment covering 90–106 (PPQASPSGSSDSLGSGE) has biased composition (low complexity). GTP is bound by residues 122 to 129 (GESGVGKS), 230 to 233 (NKSD), and 261 to 262 (AA). Positions 282 to 309 (RGRGHAGGQRPEPSSPDGPAPPTRRESL) are disordered. Over residues 294-303 (PSSPDGPAPP) the composition is skewed to pro residues. Ser296 carries the post-translational modification Phosphoserine.

It belongs to the small GTPase superfamily. RGK family.

Its subcellular location is the cell membrane. In terms of biological role, binds GTP saturably and exhibits a low intrinsic rate of GTP hydrolysis. In Mus musculus (Mouse), this protein is GTP-binding protein REM 2 (Rem2).